The primary structure comprises 232 residues: Large ribosomal subunit protein uL1 (232 aa).

The protein belongs to the universal ribosomal protein uL1 family. Part of the 50S ribosomal subunit.

Its function is as follows. Binds directly to 23S rRNA. The L1 stalk is quite mobile in the ribosome, and is involved in E site tRNA release. In terms of biological role, protein L1 is also a translational repressor protein, it controls the translation of the L11 operon by binding to its mRNA. The protein is Large ribosomal subunit protein uL1 of Phocaeicola vulgatus (strain ATCC 8482 / DSM 1447 / JCM 5826 / CCUG 4940 / NBRC 14291 / NCTC 11154) (Bacteroides vulgatus).